The following is a 469-amino-acid chain: Properdin (469 aa).

Positions Met1–Ser27 are cleaved as a signal peptide. TSP type-1 domains are found at residues Asp28–Arg76, Ser77–Pro134, Met136–Pro191, His193–Pro255, Ala257–Pro313, Asp315–Pro377, and Lys379–Lys462. Cystine bridges form between Cys32/Cys56, Cys43/Cys72, and Cys57/Cys75. 2 C-linked (Man) tryptophan glycosylation sites follow: Trp83 and Trp86. 7 cysteine pairs are disulfide-bonded: Cys89-Cys127, Cys93-Cys133, Cys104-Cys111, Cys132-Cys170, Cys148-Cys184, Cys152-Cys190, and Cys163-Cys174. C-linked (Man) tryptophan glycosylation is found at Trp139, Trp142, and Trp145. O-linked (Fuc...) threonine glycosylation occurs at Thr151. Trp196, Trp199, and Trp202 each carry a C-linked (Man) tryptophan glycan. 3 cysteine pairs are disulfide-bonded: Cys205–Cys248, Cys209–Cys254, and Cys224–Cys238. The O-linked (Fuc...) serine glycan is linked to Ser208. Positions Glu218 to Cys238 are disordered. Trp260 and Trp263 each carry a C-linked (Man) tryptophan glycan. Intrachain disulfides connect Cys269–Cys306, Cys273–Cys312, and Cys284–Cys296. The O-linked (Fuc...) threonine glycan is linked to Thr272. 2 C-linked (Man) tryptophan glycosylation sites follow: Trp321 and Trp324. 3 disulfide bridges follow: Cys327-Cys370, Cys337-Cys376, and Cys350-Cys360. An interaction with Complement C3 beta chain region spans residues Lys351 to Arg359. C-linked (Man) tryptophan glycosylation is found at Trp382, Trp385, and Trp388. 3 disulfide bridges follow: Cys391–Cys455, Cys395–Cys461, and Cys407–Cys439. The N-linked (GlcNAc...) asparagine glycan is linked to Asn428.

In plasma, properdin exists as dimers, trimers or tetramers in the relative proportions of 26:54:20. Interacts with the pro-C3-convertase enzyme complex (C3b-Bb) comprised of Complement C3 beta chain (C3b) and the Complement factor B Bb fragment (Bb), where it binds (via its TSP type-1 5 domain) with C3b and Bb. This interaction stabilizes the complex and allows it to become the active C3-convertase enzyme complex (C3b-Bb-FP). Interacts with C3b. Interacts with CFB.

It localises to the secreted. Functionally, a positive regulator of the alternate pathway of complement. It binds to and stabilizes the C3- and C5-convertase enzyme complexes. Inhibits CFI-CFH mediated degradation of Inhibits CFI-CFH mediated degradation of Complement C3 beta chain (C3b). The sequence is that of Properdin (CFP) from Pongo abelii (Sumatran orangutan).